The following is a 100-amino-acid chain: Large ribosomal subunit protein bL21 (100 aa).

This sequence belongs to the bacterial ribosomal protein bL21 family. In terms of assembly, part of the 50S ribosomal subunit. Contacts protein L20.

Its function is as follows. This protein binds to 23S rRNA in the presence of protein L20. The protein is Large ribosomal subunit protein bL21 of Corynebacterium kroppenstedtii (strain DSM 44385 / JCM 11950 / CIP 105744 / CCUG 35717).